We begin with the raw amino-acid sequence, 857 residues long: Protein argonaute-1 (857 aa).

The 120-residue stretch at Pro227–Ala346 folds into the PAZ domain. 2 interaction with guide RNA regions span residues Tyr309–Tyr314 and Gly522–Lys564. Residues Leu515–Val816 enclose the Piwi domain. The interval Pro670–Pro675 is impairs access of bound RNA to the active site. Interaction with guide RNA regions lie at residues Arg708–Arg712, His751–Arg759, and Tyr788–Tyr813.

The protein belongs to the argonaute family. Ago subfamily. Interacts with DDB1, DDX5, DDX6, DHX30, DHX36, DDX47, DICER1, AGO2, ELAVL1, HNRNPF, IGF2BP1, ILF3, IMP8, MATR3, MOV10, PABPC1, PRMT5, RBM4, SART3, TNRC6B, UPF1 and YBX1. Associates with polysomes and messenger ribonucleoproteins (mNRPs). Interacts with LIMD1, WTIP and AJUBA. Interacts with APOBEC3F, APOBEC3G and APOBEC3H. Post-translationally, ubiquitinated on surface-exposed lysines by a SCF-like E3 ubiquitin-protein ligase complex containing ZSWIM8 during target-directed microRNA degradation (TDMD), a process that mediates degradation of microRNAs (miRNAs). Ubiquitination by the SCF-like E3 ubiquitin-protein ligase complex containing ZSWIM8 leads to its subsequent degradation, thereby exposing miRNAs for degradation. ZSWIM8 recognizes and binds AGO1 when it is engaged with a TDMD target.

It is found in the cytoplasm. The protein resides in the P-body. Required for RNA-mediated gene silencing (RNAi). Binds to short RNAs such as microRNAs (miRNAs) or short interfering RNAs (siRNAs), and represses the translation of mRNAs which are complementary to them. Lacks endonuclease activity and does not appear to cleave target mRNAs. Also required for transcriptional gene silencing (TGS) of promoter regions which are complementary to bound short antigene RNAs (agRNAs). The polypeptide is Protein argonaute-1 (AGO1) (Homo sapiens (Human)).